Consider the following 337-residue polypeptide: Alanine racemase (337 aa).

The Proton acceptor; specific for D-alanine role is filled by Lys33. Position 33 is an N6-(pyridoxal phosphate)lysine (Lys33). Residue Arg118 coordinates substrate. Tyr246 (proton acceptor; specific for L-alanine) is an active-site residue. Residue Met292 coordinates substrate.

This sequence belongs to the alanine racemase family. Pyridoxal 5'-phosphate serves as cofactor.

It carries out the reaction L-alanine = D-alanine. It participates in amino-acid biosynthesis; D-alanine biosynthesis; D-alanine from L-alanine: step 1/1. Catalyzes the interconversion of L-alanine and D-alanine. May also act on other amino acids. This is Alanine racemase (alr) from Campylobacter concisus (strain 13826).